Reading from the N-terminus, the 164-residue chain is Thiol peroxidase (164 aa).

The Thioredoxin domain occupies 18–163; it reads VSEGQHAPDF…FDAALEAYRN (146 aa). Residue cysteine 60 is the Cysteine sulfenic acid (-SOH) intermediate of the active site. Residues cysteine 60 and cysteine 93 are joined by a disulfide bond.

The protein belongs to the peroxiredoxin family. Tpx subfamily. As to quaternary structure, homodimer.

The catalysed reaction is a hydroperoxide + [thioredoxin]-dithiol = an alcohol + [thioredoxin]-disulfide + H2O. In terms of biological role, thiol-specific peroxidase that catalyzes the reduction of hydrogen peroxide and organic hydroperoxides to water and alcohols, respectively. Plays a role in cell protection against oxidative stress by detoxifying peroxides. The chain is Thiol peroxidase from Staphylococcus haemolyticus (strain JCSC1435).